Reading from the N-terminus, the 108-residue chain is Peptidyl-prolyl cis-trans isomerase Fkbp12 (108 aa).

Positions 1-21 are disordered; sequence MGVQVVPIAPGDGSTYPKNGQ. The PPIase FKBP-type domain maps to 20–108; that stretch reads GQKVTVHYTG…TFDVELLKVE (89 aa).

Belongs to the FKBP-type PPIase family. FKBP1 subfamily.

Its subcellular location is the cytoplasm. The enzyme catalyses [protein]-peptidylproline (omega=180) = [protein]-peptidylproline (omega=0). In terms of biological role, PPIases accelerate the folding of proteins. It catalyzes the cis-trans isomerization of proline imidic peptide bonds in oligopeptides. Binds to ligand-free TGF beta type I receptor, from which it is released upon a ligand-induced, type II receptor mediated phosphorylation of the type I receptor. Binding is inhibitory to the signaling pathways of the TGF beta family ligands. The chain is Peptidyl-prolyl cis-trans isomerase Fkbp12 from Drosophila melanogaster (Fruit fly).